The chain runs to 136 residues: 6,7-dimethyl-8-ribityllumazine synthase (136 aa).

5-amino-6-(D-ribitylamino)uracil is bound by residues F11, 43-45 (VYD), and 67-69 (CVI). Residue 72 to 73 (DT) coordinates (2S)-2-hydroxy-3-oxobutyl phosphate. The active-site Proton donor is H75. Position 100 (L100) interacts with 5-amino-6-(D-ribitylamino)uracil. R115 provides a ligand contact to (2S)-2-hydroxy-3-oxobutyl phosphate.

This sequence belongs to the DMRL synthase family. In terms of assembly, forms an icosahedral capsid composed of 60 subunits, arranged as a dodecamer of pentamers.

It catalyses the reaction (2S)-2-hydroxy-3-oxobutyl phosphate + 5-amino-6-(D-ribitylamino)uracil = 6,7-dimethyl-8-(1-D-ribityl)lumazine + phosphate + 2 H2O + H(+). It functions in the pathway cofactor biosynthesis; riboflavin biosynthesis; riboflavin from 2-hydroxy-3-oxobutyl phosphate and 5-amino-6-(D-ribitylamino)uracil: step 1/2. Its function is as follows. Catalyzes the formation of 6,7-dimethyl-8-ribityllumazine by condensation of 5-amino-6-(D-ribitylamino)uracil with 3,4-dihydroxy-2-butanone 4-phosphate. This is the penultimate step in the biosynthesis of riboflavin. This Methanococcus aeolicus (strain ATCC BAA-1280 / DSM 17508 / OCM 812 / Nankai-3) protein is 6,7-dimethyl-8-ribityllumazine synthase.